Consider the following 333-residue polypeptide: ADP-L-glycero-D-manno-heptose-6-epimerase (333 aa).

NADP(+) contacts are provided by residues 11–12 (FI), 32–33 (DN), Lys-39, Lys-54, 76–80 (QGACS), and Asn-93. Residue Tyr-140 is the Proton acceptor of the active site. Lys-144 provides a ligand contact to NADP(+). Asn-170 contacts substrate. NADP(+) contacts are provided by Val-171 and Lys-179. Catalysis depends on Lys-179, which acts as the Proton acceptor. Residues Arg-181, His-188, 202–205 (FGGW), Arg-215, and Tyr-294 contribute to the substrate site.

The protein belongs to the NAD(P)-dependent epimerase/dehydratase family. HldD subfamily. Homopentamer. NADP(+) is required as a cofactor.

The catalysed reaction is ADP-D-glycero-beta-D-manno-heptose = ADP-L-glycero-beta-D-manno-heptose. It participates in nucleotide-sugar biosynthesis; ADP-L-glycero-beta-D-manno-heptose biosynthesis; ADP-L-glycero-beta-D-manno-heptose from D-glycero-beta-D-manno-heptose 7-phosphate: step 4/4. Its pathway is bacterial outer membrane biogenesis; LPS core biosynthesis. Catalyzes the interconversion between ADP-D-glycero-beta-D-manno-heptose and ADP-L-glycero-beta-D-manno-heptose via an epimerization at carbon 6 of the heptose. The chain is ADP-L-glycero-D-manno-heptose-6-epimerase from Chromobacterium violaceum (strain ATCC 12472 / DSM 30191 / JCM 1249 / CCUG 213 / NBRC 12614 / NCIMB 9131 / NCTC 9757 / MK).